We begin with the raw amino-acid sequence, 415 residues long: Gamma-glutamyl phosphate reductase (415 aa).

The protein belongs to the gamma-glutamyl phosphate reductase family.

The protein resides in the cytoplasm. The catalysed reaction is L-glutamate 5-semialdehyde + phosphate + NADP(+) = L-glutamyl 5-phosphate + NADPH + H(+). The protein operates within amino-acid biosynthesis; L-proline biosynthesis; L-glutamate 5-semialdehyde from L-glutamate: step 2/2. In terms of biological role, catalyzes the NADPH-dependent reduction of L-glutamate 5-phosphate into L-glutamate 5-semialdehyde and phosphate. The product spontaneously undergoes cyclization to form 1-pyrroline-5-carboxylate. This Bacillus cereus (strain B4264) protein is Gamma-glutamyl phosphate reductase.